The sequence spans 223 residues: Putative endonuclease segD (223 aa).

In terms of domain architecture, GIY-YIG spans 4-87; it reads MKYLIYQITN…FVMRTDTYNA (84 aa).

To endonucleases of group I introns of fungi and phage. Mg(2+) serves as cofactor.

Functionally, probably involved in the movement of the endonuclease-encoding DNA. The chain is Putative endonuclease segD (segD) from Enterobacteria phage T4 (Bacteriophage T4).